A 677-amino-acid polypeptide reads, in one-letter code: DNA ligase (677 aa).

Residues Asp35–Asp39, Ser84–Leu85, and Glu116 contribute to the NAD(+) site. Lys118 functions as the N6-AMP-lysine intermediate in the catalytic mechanism. NAD(+)-binding residues include Arg139, Glu176, Lys295, and Lys319. Zn(2+) contacts are provided by Cys413, Cys416, Cys431, and Cys437. One can recognise a BRCT domain in the interval Leu596 to Gly677.

This sequence belongs to the NAD-dependent DNA ligase family. LigA subfamily. Requires Mg(2+) as cofactor. The cofactor is Mn(2+).

It carries out the reaction NAD(+) + (deoxyribonucleotide)n-3'-hydroxyl + 5'-phospho-(deoxyribonucleotide)m = (deoxyribonucleotide)n+m + AMP + beta-nicotinamide D-nucleotide.. DNA ligase that catalyzes the formation of phosphodiester linkages between 5'-phosphoryl and 3'-hydroxyl groups in double-stranded DNA using NAD as a coenzyme and as the energy source for the reaction. It is essential for DNA replication and repair of damaged DNA. The polypeptide is DNA ligase (Pseudoalteromonas atlantica (strain T6c / ATCC BAA-1087)).